A 446-amino-acid polypeptide reads, in one-letter code: Low-affinity gluconate transporter (446 aa).

Methionine 1 is a topological domain (cytoplasmic). The helical transmembrane segment at 2 to 22 threads the bilayer; sequence TTLTLVLTAVGSVLLLLFLVM. At 23-26 the chain is on the periplasmic side; it reads KARM. A helical transmembrane segment spans residues 27–47; that stretch reads HAFLALMVVSMGAGLFSGMPL. At 48 to 58 the chain is on the cytoplasmic side; the sequence is DKIAATMEKGM. A helical membrane pass occupies residues 59–79; the sequence is GGTLGFLAVVVALGAMFGKIL. Residues 80–109 lie on the Periplasmic side of the membrane; that stretch reads HETGAVDQIAVKMLKSFGHSRAHYAIGLAG. A helical transmembrane segment spans residues 110 to 130; that stretch reads LVCALPLFFEVAIVLLISVAF. Topologically, residues 131-142 are cytoplasmic; it reads SMARHTGTNLVK. Residues 143–163 form a helical membrane-spanning segment; sequence LVIPLFAGVAAAAAFLVPGPA. The Periplasmic segment spans residues 164-176; that stretch reads PMLLASQMNADFG. The helical transmembrane segment at 177-197 threads the bilayer; sequence WMILIGLCAAIPGMIIAGPLW. The Cytoplasmic portion of the chain corresponds to 198 to 225; sequence GNFISRYVELHIPDDISEPHLGEGKMPS. A helical transmembrane segment spans residues 226–246; that stretch reads FGFSLSLILLPLVLVGLKTIA. Topologically, residues 247 to 261 are periplasmic; sequence ARFVPEGSTAYEWFE. Residues 262 to 282 form a helical membrane-spanning segment; sequence FIGHPFTAILVACLVAIYGLA. Over 283–294 the chain is Cytoplasmic; the sequence is MRQGMPKDKVME. A helical membrane pass occupies residues 295 to 315; the sequence is ICGHALQPAGIILLVIGAGGV. At 316–330 the chain is on the periplasmic side; sequence FKQVLVDSGVGPALG. The helical transmembrane segment at 331–351 threads the bilayer; that stretch reads EALTGMGLPIAITCFVLAAAV. Residue arginine 352 is a topological domain, cytoplasmic. The chain crosses the membrane as a helical span at residues 353–373; that stretch reads IIQGSATVACLTAVGLVMPVI. At 374–387 the chain is on the periplasmic side; the sequence is EQLNYSGAQMAALS. Residues 388-408 traverse the membrane as a helical segment; it reads ICIAGGSIVVSHVNDAGFWLF. Residues 409–424 are Cytoplasmic-facing; the sequence is GKFTGATEAETLKTWT. A helical transmembrane segment spans residues 425–445; the sequence is MMETILGTVGAIVGMIAFQLL. Serine 446 is a topological domain (periplasmic).

The protein belongs to the GntP permease family.

It is found in the cell inner membrane. Part of the gluconate utilization system Gnt-I; low-affinity intake of gluconate. The chain is Low-affinity gluconate transporter (gntU) from Escherichia coli O157:H7.